Reading from the N-terminus, the 239-residue chain is Increased recombination centers protein 22-1 (239 aa).

A signal peptide spans 1-19 (MKLSTIFTAFAATIATVAG). Residues 20-161 (YETTGSKQTV…AAVSFFDPRL (142 aa)) are Lumenal-facing. A helical membrane pass occupies residues 162 to 182 (IFLELVLLITFAGLIYVGYEI). Residues 183–239 (WGKQYFKGVAPVKAKKVSAAKASSPVASGPSTTSATGYDTNWIPESHLKQKKTKKVN) are Cytoplasmic-facing. A compositionally biased stretch (low complexity) spans 201-213 (AAKASSPVASGPS). The tract at residues 201–222 (AAKASSPVASGPSTTSATGYDT) is disordered.

Belongs to the IRC22 family.

The protein localises to the endoplasmic reticulum membrane. Functionally, is probably involved in a pathway contributing to genomic integrity. This is Increased recombination centers protein 22-1 (IRC22-1) from Candida albicans (strain SC5314 / ATCC MYA-2876) (Yeast).